Consider the following 369-residue polypeptide: Methylthioribose-1-phosphate isomerase (369 aa).

N-acetylmethionine is present on methionine 1. Arginine 158 carries the post-translational modification Omega-N-methylarginine. The active-site Proton donor is aspartate 248. Serine 366 is subject to Phosphoserine.

This sequence belongs to the eIF-2B alpha/beta/delta subunits family. MtnA subfamily.

It is found in the cytoplasm. The protein resides in the nucleus. It catalyses the reaction 5-(methylsulfanyl)-alpha-D-ribose 1-phosphate = 5-(methylsulfanyl)-D-ribulose 1-phosphate. Its pathway is amino-acid biosynthesis; L-methionine biosynthesis via salvage pathway; L-methionine from S-methyl-5-thio-alpha-D-ribose 1-phosphate: step 1/6. Catalyzes the interconversion of methylthioribose-1-phosphate (MTR-1-P) into methylthioribulose-1-phosphate (MTRu-1-P). This chain is Methylthioribose-1-phosphate isomerase (Mri1), found in Mus musculus (Mouse).